Here is a 236-residue protein sequence, read N- to C-terminus: MNIKKVDKYSFLEFKDDKFSLYFSTAENGLNFNINTEEGNDNIRNLKDWFNVKDVGYLKQTHSDIILNYDSDKELLEGDALITDKDNTLVGVFTADCVPVLLYDKSKNVMAAVHSGWKGTSDMIVKKTIIKMKQEFLSTASDITVYIGPHNKACCYEFGEEALSEFEGSGIYDISEIYKDGKLDLEKCIVKQCKSENVNNIKCLNICTNCSKEYKMFSYRRDGKSAGRMFSFIIKK.

Positions 62, 97, and 114 each coordinate Zn(2+).

The protein belongs to the purine nucleoside phosphorylase YfiH/LACC1 family. Homodimer. Cu(2+) serves as cofactor. Zn(2+) is required as a cofactor.

The enzyme catalyses adenosine + phosphate = alpha-D-ribose 1-phosphate + adenine. It carries out the reaction S-methyl-5'-thioadenosine + phosphate = 5-(methylsulfanyl)-alpha-D-ribose 1-phosphate + adenine. The catalysed reaction is inosine + phosphate = alpha-D-ribose 1-phosphate + hypoxanthine. It catalyses the reaction adenosine + H2O + H(+) = inosine + NH4(+). Purine nucleoside enzyme that catalyzes the phosphorolysis of adenosine and inosine nucleosides, yielding D-ribose 1-phosphate and the respective free bases, adenine and hypoxanthine. Also catalyzes the phosphorolysis of S-methyl-5'-thioadenosine into adenine and S-methyl-5-thio-alpha-D-ribose 1-phosphate. Also has adenosine deaminase activity. In Clostridium acetobutylicum (strain ATCC 824 / DSM 792 / JCM 1419 / IAM 19013 / LMG 5710 / NBRC 13948 / NRRL B-527 / VKM B-1787 / 2291 / W), this protein is Purine nucleoside phosphorylase CA_C1699.